The primary structure comprises 369 residues: Anhydro-N-acetylmuramic acid kinase (369 aa).

An ATP-binding site is contributed by 12-19 (GTSMDGVD).

This sequence belongs to the anhydro-N-acetylmuramic acid kinase family.

The enzyme catalyses 1,6-anhydro-N-acetyl-beta-muramate + ATP + H2O = N-acetyl-D-muramate 6-phosphate + ADP + H(+). Its pathway is amino-sugar metabolism; 1,6-anhydro-N-acetylmuramate degradation. The protein operates within cell wall biogenesis; peptidoglycan recycling. Its function is as follows. Catalyzes the specific phosphorylation of 1,6-anhydro-N-acetylmuramic acid (anhMurNAc) with the simultaneous cleavage of the 1,6-anhydro ring, generating MurNAc-6-P. Is required for the utilization of anhMurNAc either imported from the medium or derived from its own cell wall murein, and thus plays a role in cell wall recycling. The sequence is that of Anhydro-N-acetylmuramic acid kinase from Shewanella sp. (strain W3-18-1).